Here is a 494-residue protein sequence, read N- to C-terminus: MDLQRTLMFSCWVLSLLIIKTTAYNEKQLFQPLETENANAMTAVMERGLKTQRRPEHKNAYATMMYMGTPRDYEFYVATRVLIRSLKSLHVDADIVVIASLDVPINWIHALEEEDGAKVVRVENLENPYKKQTNFDNRFKLSLNKLYAWSLSDYDRVVMLDVDNLFLKNTDELFQCGQFCAVFINPCIFHTGLFVLQPSMEVFRDMLHELEVKRDNPDGADQGFLVSYFSDLLNQPLFRPPPDNRTALKGHFRLPLGYQMDASYYYLKLRWNVPCGPNSVITFPGAVWLKPWYWWSWPVLPLGLSWHHQRRYTISYSAEMPWVLTQAVFYLGIILVTRLARPNMTKLCYRRSDKNLSMIQTAFKFVALLFILSAYIIPFFIIPQTIHPLIGWSLYLTGSFALSTIPINAFLLPILPVITPWLGIFGTLLVMAFPSYPDGVVRALSVFGYAFCCAPFLWVSFVKITSHLQIMIDKEVLFPRLGESGVTSGLSKLY.

Residues 4–24 (QRTLMFSCWVLSLLIIKTTAY) traverse the membrane as a helical segment. Residues Asp-161 and Asp-163 each coordinate Mn(2+). A run of 5 helical transmembrane segments spans residues 316–336 (YSAEMPWVLTQAVFYLGIILV), 362–382 (AFKFVALLFILSAYIIPFFII), 389–409 (LIGWSLYLTGSFALSTIPINA), 410–430 (FLLPILPVITPWLGIFGTLLV), and 444–464 (LSVFGYAFCCAPFLWVSFVKI).

This sequence belongs to the glycosyltransferase 8 family. Glycogenin subfamily. Mn(2+) serves as cofactor.

It localises to the membrane. The protein is Putative glucuronosyltransferase PGSIP7 (PGSIP7) of Arabidopsis thaliana (Mouse-ear cress).